We begin with the raw amino-acid sequence, 134 residues long: Ribosome-binding factor A (134 aa).

It belongs to the RbfA family. In terms of assembly, monomer. Binds 30S ribosomal subunits, but not 50S ribosomal subunits or 70S ribosomes.

The protein localises to the cytoplasm. In terms of biological role, one of several proteins that assist in the late maturation steps of the functional core of the 30S ribosomal subunit. Associates with free 30S ribosomal subunits (but not with 30S subunits that are part of 70S ribosomes or polysomes). Required for efficient processing of 16S rRNA. May interact with the 5'-terminal helix region of 16S rRNA. The sequence is that of Ribosome-binding factor A from Bdellovibrio bacteriovorus (strain ATCC 15356 / DSM 50701 / NCIMB 9529 / HD100).